Reading from the N-terminus, the 124-residue chain is Large ribosomal subunit protein bL12 (124 aa).

Belongs to the bacterial ribosomal protein bL12 family. Homodimer. Part of the ribosomal stalk of the 50S ribosomal subunit. Forms a multimeric L10(L12)X complex, where L10 forms an elongated spine to which 2 to 4 L12 dimers bind in a sequential fashion. Binds GTP-bound translation factors.

In terms of biological role, forms part of the ribosomal stalk which helps the ribosome interact with GTP-bound translation factors. Is thus essential for accurate translation. The chain is Large ribosomal subunit protein bL12 from Aromatoleum aromaticum (strain DSM 19018 / LMG 30748 / EbN1) (Azoarcus sp. (strain EbN1)).